The chain runs to 116 residues: Large ribosomal subunit protein uL18 (116 aa).

It belongs to the universal ribosomal protein uL18 family. As to quaternary structure, part of the 50S ribosomal subunit; part of the 5S rRNA/L5/L18/L25 subcomplex. Contacts the 5S and 23S rRNAs.

This is one of the proteins that bind and probably mediate the attachment of the 5S RNA into the large ribosomal subunit, where it forms part of the central protuberance. The sequence is that of Large ribosomal subunit protein uL18 from Pseudomonas putida (strain W619).